The following is a 241-amino-acid chain: Uridylate kinase (241 aa).

ATP is bound at residue 15-18 (KISG). The tract at residues 23 to 28 (GDQGFG) is involved in allosteric activation by GTP. Gly-57 provides a ligand contact to UMP. Positions 58 and 62 each coordinate ATP. Residues Asp-77 and 138–145 (TGNPYFTT) contribute to the UMP site. Positions 165, 171, and 174 each coordinate ATP.

Belongs to the UMP kinase family. In terms of assembly, homohexamer.

The protein localises to the cytoplasm. It carries out the reaction UMP + ATP = UDP + ADP. It participates in pyrimidine metabolism; CTP biosynthesis via de novo pathway; UDP from UMP (UMPK route): step 1/1. Its activity is regulated as follows. Allosterically activated by GTP. Inhibited by UTP. Functionally, catalyzes the reversible phosphorylation of UMP to UDP. This chain is Uridylate kinase, found in Paracoccus zeaxanthinifaciens.